We begin with the raw amino-acid sequence, 170 residues long: Phosphopantetheine adenylyltransferase (170 aa).

Residue Thr-17 coordinates substrate. Residues 17-18 (TF) and His-25 contribute to the ATP site. Positions 49, 81, and 95 each coordinate substrate. ATP-binding positions include 96 to 98 (GLR), Glu-106, and 131 to 137 (LMYISST).

Belongs to the bacterial CoaD family. Homohexamer. Requires Mg(2+) as cofactor.

The protein resides in the cytoplasm. It catalyses the reaction (R)-4'-phosphopantetheine + ATP + H(+) = 3'-dephospho-CoA + diphosphate. It functions in the pathway cofactor biosynthesis; coenzyme A biosynthesis; CoA from (R)-pantothenate: step 4/5. In terms of biological role, reversibly transfers an adenylyl group from ATP to 4'-phosphopantetheine, yielding dephospho-CoA (dPCoA) and pyrophosphate. The polypeptide is Phosphopantetheine adenylyltransferase (Legionella pneumophila subsp. pneumophila (strain Philadelphia 1 / ATCC 33152 / DSM 7513)).